A 470-amino-acid polypeptide reads, in one-letter code: Ribulose bisphosphate carboxylase large chain (470 aa).

Substrate-binding residues include Asn115 and Thr165. Lys167 (proton acceptor) is an active-site residue. Lys169 serves as a coordination point for substrate. Mg(2+)-binding residues include Lys193, Asp195, and Glu196. Lys193 is subject to N6-carboxylysine. His286 functions as the Proton acceptor in the catalytic mechanism. Substrate-binding residues include Arg287, His319, and Ser371.

This sequence belongs to the RuBisCO large chain family. Type I subfamily. In terms of assembly, heterohexadecamer of 8 large chains and 8 small chains. Requires Mg(2+) as cofactor.

Its subcellular location is the carboxysome. The enzyme catalyses 2 (2R)-3-phosphoglycerate + 2 H(+) = D-ribulose 1,5-bisphosphate + CO2 + H2O. The catalysed reaction is D-ribulose 1,5-bisphosphate + O2 = 2-phosphoglycolate + (2R)-3-phosphoglycerate + 2 H(+). In terms of biological role, ruBisCO catalyzes two reactions: the carboxylation of D-ribulose 1,5-bisphosphate, the primary event in carbon dioxide fixation, as well as the oxidative fragmentation of the pentose substrate in the photorespiration process. Both reactions occur simultaneously and in competition at the same active site. This is Ribulose bisphosphate carboxylase large chain from Prochlorococcus marinus (strain NATL1A).